Reading from the N-terminus, the 245-residue chain is tRNA pseudouridine synthase A (245 aa).

Asp-52 serves as the catalytic Nucleophile. A substrate-binding site is contributed by Tyr-111.

It belongs to the tRNA pseudouridine synthase TruA family. In terms of assembly, homodimer.

It carries out the reaction uridine(38/39/40) in tRNA = pseudouridine(38/39/40) in tRNA. Functionally, formation of pseudouridine at positions 38, 39 and 40 in the anticodon stem and loop of transfer RNAs. The chain is tRNA pseudouridine synthase A from Afipia carboxidovorans (strain ATCC 49405 / DSM 1227 / KCTC 32145 / OM5) (Oligotropha carboxidovorans).